Reading from the N-terminus, the 667-residue chain is Threonine--tRNA ligase (667 aa).

The region spanning 1–64 is the TGS domain; the sequence is MSEAISLTFP…TDGKIEIVTR (64 aa). The interval 245–553 is catalytic; sequence DHRRLGREMD…LIENFAGHMP (309 aa). Positions 347, 398, and 530 each coordinate Zn(2+).

This sequence belongs to the class-II aminoacyl-tRNA synthetase family. In terms of assembly, homodimer. Requires Zn(2+) as cofactor.

It is found in the cytoplasm. It carries out the reaction tRNA(Thr) + L-threonine + ATP = L-threonyl-tRNA(Thr) + AMP + diphosphate + H(+). Its function is as follows. Catalyzes the attachment of threonine to tRNA(Thr) in a two-step reaction: L-threonine is first activated by ATP to form Thr-AMP and then transferred to the acceptor end of tRNA(Thr). Also edits incorrectly charged L-seryl-tRNA(Thr). This is Threonine--tRNA ligase from Agrobacterium fabrum (strain C58 / ATCC 33970) (Agrobacterium tumefaciens (strain C58)).